We begin with the raw amino-acid sequence, 181 residues long: Small ribosomal subunit protein uS4 (181 aa).

Residues 104–172 (RRLQTIVYKK…SRPPVMSQQE (69 aa)) enclose the S4 RNA-binding domain.

This sequence belongs to the universal ribosomal protein uS4 family. Part of the 30S ribosomal subunit. Contacts protein S5. The interaction surface between S4 and S5 is involved in control of translational fidelity.

Its function is as follows. One of the primary rRNA binding proteins, it binds directly to 16S rRNA where it nucleates assembly of the body of the 30S subunit. With S5 and S12 plays an important role in translational accuracy. The protein is Small ribosomal subunit protein uS4 of Saccharolobus solfataricus (strain ATCC 35092 / DSM 1617 / JCM 11322 / P2) (Sulfolobus solfataricus).